The following is a 130-amino-acid chain: Prefoldin subunit alpha (130 aa).

This sequence belongs to the prefoldin subunit alpha family. As to quaternary structure, heterohexamer of two alpha and four beta subunits.

It is found in the cytoplasm. Molecular chaperone capable of stabilizing a range of proteins. Seems to fulfill an ATP-independent, HSP70-like function in archaeal de novo protein folding. The chain is Prefoldin subunit alpha (pfdA) from Thermoplasma acidophilum (strain ATCC 25905 / DSM 1728 / JCM 9062 / NBRC 15155 / AMRC-C165).